We begin with the raw amino-acid sequence, 513 residues long: 2-isopropylmalate synthase (513 aa).

The 265-residue stretch at 4–268 (IKIFDTTLRD…ETGIKTELIY (265 aa)) folds into the Pyruvate carboxyltransferase domain. The Mn(2+) site is built by Asp-13, His-203, His-205, and Asn-239. The interval 392–513 (KLVHFHVHTG…GLLRKNGGAE (122 aa)) is regulatory domain.

Belongs to the alpha-IPM synthase/homocitrate synthase family. LeuA type 1 subfamily. As to quaternary structure, homodimer. Requires Mn(2+) as cofactor.

It is found in the cytoplasm. It catalyses the reaction 3-methyl-2-oxobutanoate + acetyl-CoA + H2O = (2S)-2-isopropylmalate + CoA + H(+). The protein operates within amino-acid biosynthesis; L-leucine biosynthesis; L-leucine from 3-methyl-2-oxobutanoate: step 1/4. Functionally, catalyzes the condensation of the acetyl group of acetyl-CoA with 3-methyl-2-oxobutanoate (2-ketoisovalerate) to form 3-carboxy-3-hydroxy-4-methylpentanoate (2-isopropylmalate). This is 2-isopropylmalate synthase from Thermotoga maritima (strain ATCC 43589 / DSM 3109 / JCM 10099 / NBRC 100826 / MSB8).